A 441-amino-acid polypeptide reads, in one-letter code: Divalent metal cation transporter MntH (441 aa).

A run of 11 helical transmembrane segments spans residues Thr-41–Met-61, Ala-74–Phe-94, His-116–Thr-136, Phe-141–Ile-161, Ala-183–Ala-203, Ala-223–Leu-243, Val-271–Ser-291, Ile-311–Val-331, Ala-360–Met-380, Val-381–Leu-401, and Ile-419–Ala-439.

The protein belongs to the NRAMP family.

It localises to the cell inner membrane. Its function is as follows. H(+)-stimulated, divalent metal cation uptake system. This Burkholderia ambifaria (strain ATCC BAA-244 / DSM 16087 / CCUG 44356 / LMG 19182 / AMMD) (Burkholderia cepacia (strain AMMD)) protein is Divalent metal cation transporter MntH.